The primary structure comprises 834 residues: Probable glucan 1,3-beta-glucosidase D (834 aa).

Over residues 1–33 the composition is skewed to basic and acidic residues; sequence MPSHSRSRDRYGGRDSDREARYDYDYARRRYAT. 2 disordered regions span residues 1-188 and 200-251; these read MPSH…ASHL and QYEK…TKAR. The Cytoplasmic portion of the chain corresponds to 1-306; that stretch reads MPSHSRSRDR…GGRPFWKRKK (306 aa). Over residues 34–45 the composition is skewed to acidic residues; the sequence is DDNDDDYDDDEL. 4 stretches are compositionally biased toward basic and acidic residues: residues 46-76, 98-173, 201-218, and 228-245; these read EHGL…RDAE, YGHD…ETAA, YEKE…AAKA, and VVGE…ESHR. Residues 307 to 327 form a helical; Signal-anchor for type II membrane protein membrane-spanning segment; sequence WIGLGALILILVIVIPVAVVV. Over 328-834 the chain is Extracellular; sequence SKKHDNKSDP…PDFGNLPEYY (507 aa). The disordered stretch occupies residues 331-354; it reads HDNKSDPADPQGTSPGKSNLDGLS. Asn-333, Asn-379, Asn-384, Asn-396, Asn-549, Asn-561, and Asn-570 each carry an N-linked (GlcNAc...) asparagine glycan. Residue Glu-600 is the Proton donor of the active site. N-linked (GlcNAc...) asparagine glycans are attached at residues Asn-639, Asn-672, and Asn-692. Residue Glu-705 is the Nucleophile of the active site.

Belongs to the glycosyl hydrolase 5 (cellulase A) family.

It localises to the cell membrane. The enzyme catalyses Successive hydrolysis of beta-D-glucose units from the non-reducing ends of (1-&gt;3)-beta-D-glucans, releasing alpha-glucose.. Glucosidase involved in the degradation of cellulosic biomass. Active on lichenan. This is Probable glucan 1,3-beta-glucosidase D (exgD) from Neosartorya fischeri (strain ATCC 1020 / DSM 3700 / CBS 544.65 / FGSC A1164 / JCM 1740 / NRRL 181 / WB 181) (Aspergillus fischerianus).